Here is a 458-residue protein sequence, read N- to C-terminus: MARAPAQARGSRGLNCLARSQQTGIPAQETDDLFSTCYCEETEEDTAHQEAGMTVDCLSIPKKKLAQSQKKINQFINSKMSTKANKELIRCFILSQIVFGKEHWKCAQALANLAYGYLTLRGLPAQAKKHAEKARNTLLTWKRNTTSDKDKKEILETLVRLYYTLGVAWLLQNHGKQAYIHLQKAERNMKELKELNNGNICGIQVSEKDLTIALGRASLAMHRMNLALAYFEKAICDVILDKGHNTSELISLYEEIAQIEQLRKNHKQAIQYLQQAYSICVSSFSEVSPQTAEASALLAKAYAMSGASEYRDAVEIYFIRSISTYQTLGSEDYETLTAIEDFCTWLIENGEKQEAYRLLKSTLNSGNFGDCGKKVAETFYNMGSICFAKGELGEAIELLSKCLMIQSLVYGSEHIKSIETKSLLSLLQRWRLKETLEKNRKEASGGETFQKTVITLLQ.

2 coiled-coil regions span residues 175–198 (GKQA…LNNG) and 246–278 (TSEL…QAYS).

It localises to the cytoplasm. It is found in the cytoskeleton. Its subcellular location is the microtubule organizing center. The protein resides in the centrosome. The protein localises to the spindle. It localises to the midbody. This Mus musculus (Mouse) protein is Tetratricopeptide repeat protein 23-like (Ttc23l).